A 285-amino-acid chain; its full sequence is HTH-type transcriptional regulator MurR (285 aa).

In terms of domain architecture, HTH rpiR-type spans 1–77; that stretch reads MLYLTKIRNA…MALIGEYSAS (77 aa). The segment at residues 37 to 56 is a DNA-binding region (H-T-H motif); it reads SRKMAKQLGISQSSIVKFAQ. The 141-residue stretch at 128-268 folds into the SIS domain; that stretch reads IIEVISKAPF…FVGLVQLNDV (141 aa).

In terms of assembly, homotetramer.

It participates in amino-sugar metabolism; N-acetylmuramate degradation [regulation]. Represses the expression of the murPQ operon involved in the uptake and degradation of N-acetylmuramic acid (MurNAc). Binds to two adjacent inverted repeats within the operator region. MurNAc 6-phosphate, the substrate of MurQ, is the specific inducer that weakens binding of MurR to the operator. In Shigella sonnei (strain Ss046), this protein is HTH-type transcriptional regulator MurR.